A 335-amino-acid polypeptide reads, in one-letter code: Dye-decolorizing peroxidase (335 aa).

Residue aspartate 149 is the Proton acceptor of the active site. Histidine 222 lines the heme pocket. A targeting peptide region spans residues leucine 312–arginine 335.

It belongs to the DyP-type peroxidase family. Homotetramer, presumably also in the encapsulin nanocompartment. The cofactor is heme b.

The protein localises to the encapsulin nanocompartment. It carries out the reaction 2 a phenolic donor + H2O2 = 2 a phenolic radical donor + 2 H2O. In terms of biological role, cargo of a type 1 encapsulin nanocompartment in situ; this cargo protects against oxidative stress at low pH. When expressed in the cytoplasm (absence of the encapsulin shell gene) it is almost as protective as the intact nanocompartment; its encapsulation has a modest yet significant effect on protection against oxidative stress at low pH. A heme-dependent peroxidase, it probably does not have deferrochelatase activity. Converts guaiacol and H2O2 to tetraguaiacol, also acts on 2,2'-azino-bis(3-ethylbenzothiazoline-6-sulfonic acid) (ABTS). Retains peroxidase activity when encapsulated but has a reduced set of substrates; acts on ABTS but not guaiacol. In Mycobacterium tuberculosis (strain ATCC 25618 / H37Rv), this protein is Dye-decolorizing peroxidase.